Consider the following 375-residue polypeptide: 4,4'-diaponeurosporenoate glycosyltransferase (375 aa).

The next 4 helical transmembrane spans lie at tryptophan 3 to phenylalanine 23, phenylalanine 164 to serine 184, isoleucine 277 to leucine 297, and phenylalanine 330 to isoleucine 350.

The protein belongs to the glycosyltransferase 2 family. CrtQ subfamily.

It localises to the cell membrane. It functions in the pathway carotenoid biosynthesis; staphyloxanthin biosynthesis; staphyloxanthin from farnesyl diphosphate: step 4/5. Catalyzes the glycosylation of 4,4'-diaponeurosporenoate, i.e. the esterification of glucose at the C1'' position with the carboxyl group of 4,4'-diaponeurosporenic acid, to form glycosyl-4,4'-diaponeurosporenoate. This is a step in the biosynthesis of staphyloxanthin, an orange pigment present in most staphylococci strains. In Staphylococcus aureus (strain bovine RF122 / ET3-1), this protein is 4,4'-diaponeurosporenoate glycosyltransferase (crtQ).